The primary structure comprises 87 residues: Translation initiation factor IF-1 2 (87 aa).

In terms of domain architecture, S1-like spans 1–72 (MAADDHIEME…TKGRIARRTT (72 aa)). The disordered stretch occupies residues 65–87 (GRIARRTTTPSGGPRPARSGNRR).

The protein belongs to the IF-1 family. In terms of assembly, component of the 30S ribosomal translation pre-initiation complex which assembles on the 30S ribosome in the order IF-2 and IF-3, IF-1 and N-formylmethionyl-tRNA(fMet); mRNA recruitment can occur at any time during PIC assembly.

The protein localises to the cytoplasm. In terms of biological role, one of the essential components for the initiation of protein synthesis. Stabilizes the binding of IF-2 and IF-3 on the 30S subunit to which N-formylmethionyl-tRNA(fMet) subsequently binds. Helps modulate mRNA selection, yielding the 30S pre-initiation complex (PIC). Upon addition of the 50S ribosomal subunit IF-1, IF-2 and IF-3 are released leaving the mature 70S translation initiation complex. This is Translation initiation factor IF-1 2 from Nitratidesulfovibrio vulgaris (strain ATCC 29579 / DSM 644 / CCUG 34227 / NCIMB 8303 / VKM B-1760 / Hildenborough) (Desulfovibrio vulgaris).